The primary structure comprises 255 residues: 5-oxoprolinase subunit A (255 aa).

This sequence belongs to the LamB/PxpA family. As to quaternary structure, forms a complex composed of PxpA, PxpB and PxpC.

It carries out the reaction 5-oxo-L-proline + ATP + 2 H2O = L-glutamate + ADP + phosphate + H(+). Its function is as follows. Catalyzes the cleavage of 5-oxoproline to form L-glutamate coupled to the hydrolysis of ATP to ADP and inorganic phosphate. The protein is 5-oxoprolinase subunit A of Pyrococcus furiosus (strain ATCC 43587 / DSM 3638 / JCM 8422 / Vc1).